A 436-amino-acid polypeptide reads, in one-letter code: tRNA pseudouridine synthase Pus10 (436 aa).

Catalysis depends on D254, which acts as the Nucleophile. The substrate site is built by Y322 and Y394.

This sequence belongs to the pseudouridine synthase Pus10 family.

The catalysed reaction is uridine(54) in tRNA = pseudouridine(54) in tRNA. It carries out the reaction uridine(55) in tRNA = pseudouridine(55) in tRNA. Responsible for synthesis of pseudouridine from uracil-54 and uracil-55 in the psi GC loop of transfer RNAs. In Methanopyrus kandleri (strain AV19 / DSM 6324 / JCM 9639 / NBRC 100938), this protein is tRNA pseudouridine synthase Pus10.